Consider the following 1324-residue polypeptide: RNA2 polyprotein (1324 aa).

It belongs to the nepoviruses RNA2 polyprotein family. Post-translationally, specific enzymatic cleavages in vivo by the P1 encoded 3C-like protease yield mature proteins. In terms of processing, the N-terminus of the coat protein is blocked.

It is found in the host cell junction. The protein localises to the host plasmodesma. The protein resides in the host cytoplasm. Its subcellular location is the host nucleus. It localises to the virion. In terms of biological role, implicated in RNA2 replication. Could also be required for nematode transmission of the virus. Transports viral genome to neighboring plant cells directly through plasmosdesmata, without any budding. The movement protein allows efficient cell to cell propagation, by bypassing the host cell wall barrier. Acts by forming a tubular structure at the host plasmodesmata, enlarging it enough to allow free passage of virion capsids. This is RNA2 polyprotein from Apium graveolens (Celery).